A 112-amino-acid chain; its full sequence is Large ribosomal subunit protein uL22 (112 aa).

Belongs to the universal ribosomal protein uL22 family. Part of the 50S ribosomal subunit.

This protein binds specifically to 23S rRNA; its binding is stimulated by other ribosomal proteins, e.g. L4, L17, and L20. It is important during the early stages of 50S assembly. It makes multiple contacts with different domains of the 23S rRNA in the assembled 50S subunit and ribosome. In terms of biological role, the globular domain of the protein is located near the polypeptide exit tunnel on the outside of the subunit, while an extended beta-hairpin is found that lines the wall of the exit tunnel in the center of the 70S ribosome. The protein is Large ribosomal subunit protein uL22 of Caldanaerobacter subterraneus subsp. tengcongensis (strain DSM 15242 / JCM 11007 / NBRC 100824 / MB4) (Thermoanaerobacter tengcongensis).